A 276-amino-acid chain; its full sequence is Bis(5'-nucleosyl)-tetraphosphatase, symmetrical (276 aa).

Belongs to the Ap4A hydrolase family.

It catalyses the reaction P(1),P(4)-bis(5'-adenosyl) tetraphosphate + H2O = 2 ADP + 2 H(+). Hydrolyzes diadenosine 5',5'''-P1,P4-tetraphosphate to yield ADP. This chain is Bis(5'-nucleosyl)-tetraphosphatase, symmetrical, found in Psychromonas ingrahamii (strain DSM 17664 / CCUG 51855 / 37).